The chain runs to 1207 residues: RNA-binding protein 20 (1207 aa).

The disordered stretch occupies residues 1-58 (MVLAAAMSQDADPSGPEQPDRDACIVPGVQGPPAPQGQQGMQPLPPPLPPPPQPQSSL). Residues 43 to 54 (PLPPPLPPPPQP) show a composition bias toward pro residues. A U1-type zinc finger spans residues 412-446 (HLPHICSICDKKVFDLKDWELHVKGKLHAQKCLLF). In terms of domain architecture, RRM spans 521–596 (RVVHICNLPE…EKLLIRMSTR (76 aa)). The segment covering 625-637 (LREADRYGPERPR) has biased composition (basic and acidic residues). Disordered stretches follow at residues 625–686 (LREA…NGED), 722–896 (EKYL…MEEL), and 951–1110 (QGET…AELK). The segment at 631–650 (YGPERPRSRSPMSRSLSPRS) is RS. Phosphoserine occurs at positions 638, 640, 643, 645, and 652. Positions 639 to 650 (RSPMSRSLSPRS) are enriched in low complexity. Basic and acidic residues predominate over residues 668–686 (YAWRDEDRETVPRRENGED). Serine 729 is subject to Phosphoserine. 3 stretches are compositionally biased toward basic and acidic residues: residues 740–759 (KGRE…DKHP), 772–789 (RKEE…PEDS), and 796–836 (EPKV…RGAE). Residue serine 789 is modified to Phosphoserine. Residues 839 to 848 (AGTEEQEGME) show a composition bias toward acidic residues. A phosphoserine mark is found at serine 853 and serine 864. Residues 853 to 863 (SVGTQQEGTES) are compositionally biased toward polar residues. Positions 867-876 (ENTRTKKGQD) are enriched in basic and acidic residues. 3 positions are modified to phosphoserine: serine 879, serine 881, and serine 963. A compositionally biased stretch (polar residues) spans 970–979 (VPSTSTSCPN). Position 999 is a phosphoserine (serine 999). Residues 1011–1022 (YEKEARGAEGSD) show a composition bias toward basic and acidic residues. A phosphoserine mark is found at serine 1034, serine 1046, serine 1057, serine 1066, serine 1078, serine 1096, and serine 1101. The span at 1050 to 1072 (DDCKARGSPEDGPHEVSPLEEKA) shows a compositional bias: basic and acidic residues. Over residues 1073–1102 (SPTTESDLQSQACQENSRYTETRSLNSRSP) the composition is skewed to polar residues. A Matrin-type zinc finger spans residues 1141-1172 (FYCKLCGLFYTSEEAAKVSHCRSTVHYRNLQK). Residues 1181-1207 (GLKETEGVDSPSPERSGIGPHLERKKL) form a disordered region. Phosphoserine occurs at positions 1190 and 1192.

In terms of assembly, associates with components of the U1 and U2 U1 small nuclear ribonucleoprotein complexes. Post-translationally, phosphorylation regulates the subcellular localization. Phosphorylation of Ser-638 and Ser-640 in the RS (arginine/serine-rich) region promotes nuclear localization of the protein. In contrast, phosphorylation of the C-terminal disordered region promotes localization to cytoplasmic ribonucleoprotein granules.

The protein localises to the nucleus. Its subcellular location is the cytoplasm. The protein resides in the cytoplasmic ribonucleoprotein granule. In terms of biological role, RNA-binding protein that acts as a regulator of mRNA splicing of a subset of genes encoding key structural proteins involved in cardiac development, such as TTN (Titin), CACNA1C, CAMK2D or PDLIM5/ENH. Acts as a repressor of mRNA splicing: specifically binds the 5'UCUU-3' motif that is predominantly found within intronic sequences of pre-mRNAs, leading to the exclusion of specific exons in target transcripts. RBM20-mediated exon skipping is hormone-dependent and is essential for TTN isoform transition in both cardiac and skeletal muscles. RBM20-mediated exon skipping of TTN provides substrates for the formation of circular RNA (circRNAs) from the TTN transcripts. Together with RBM24, promotes the expression of short isoforms of PDLIM5/ENH in cardiomyocytes. The polypeptide is RNA-binding protein 20 (Rattus norvegicus (Rat)).